Consider the following 598-residue polypeptide: MNELIKHKLELLPDSPGCYLHKDKEGTIIYVGKAKNLKKRVRSYFRGSHDTKTELLVSEIVDFEYIVTESDTEALLLEINLIQKNMPKYNIKLKDDKSYPFLKITNESFPRLVITRYIKKNDGLYFGPYPDSYTANEVKKLLDRIFPFKKCKNPINKVCFYYHLGQCCAHTICHTDKAYWDRLIDDVKHFLNGKDDKIIEDLRSKMLAASEEMAFERAAEYRDLISGIATMRTKQRVMSKDLQDRDIFGYYVDKGWMCVQVFFVRQGKLIQRDVNLFPYYNDAEEDFLTYMGQFYQDKQHFIPKEVFIPEAIDEELVAAIVPTKIIKPKRGEKKQLVALATKNARVSLQQKFDLLEKDIKKTSGAIENLGQLLKIDKPVRIEAFDNSNIQGTSPVAAMVVFVDGKPSKKDYRKFKIKTVVGPDDYASMREVLFRRYSRVKKEGLQAPNLIIVDGGVGQVNVAKDVIEKQLGLTIPVAGLQKNDKHQTHDLLFGNPLEVVPLPRRSEEFFLLHRIQDEVHRFAVTFHRQVRRKNSFSSTLDHISGLGPKRKQLLLRHFKTITAIASATSEEIQALGIPKTVVEAIQQQITDNKNDRSSP.

A GIY-YIG domain is found at 14–91; sequence DSPGCYLHKD…IQKNMPKYNI (78 aa). One can recognise a UVR domain in the interval 196–231; that stretch reads DKIIEDLRSKMLAASEEMAFERAAEYRDLISGIATM.

It belongs to the UvrC family. Interacts with UvrB in an incision complex.

The protein resides in the cytoplasm. Its function is as follows. The UvrABC repair system catalyzes the recognition and processing of DNA lesions. UvrC both incises the 5' and 3' sides of the lesion. The N-terminal half is responsible for the 3' incision and the C-terminal half is responsible for the 5' incision. This is UvrABC system protein C from Streptococcus pyogenes serotype M28 (strain MGAS6180).